We begin with the raw amino-acid sequence, 306 residues long: Palmitoyl-protein thioesterase 1 (306 aa).

The first 27 residues, 1–27 (MASPSCLWLLAVALLPWTCAARALHHL), serve as a signal peptide directing secretion. 3 disulfide bridges follow: C45–C46, C96–C128, and C152–C160. S115 is a catalytic residue. N197, N212, and N232 each carry an N-linked (GlcNAc...) asparagine glycan. Active-site residues include D233 and H289.

Belongs to the palmitoyl-protein thioesterase family. In terms of assembly, interacts with CLN5, ATP5F1A and ATP5F1B. Post-translationally, glycosylated.

It localises to the lysosome. The protein localises to the secreted. The protein resides in the golgi apparatus. It is found in the endoplasmic reticulum. It catalyses the reaction S-hexadecanoyl-L-cysteinyl-[protein] + H2O = L-cysteinyl-[protein] + hexadecanoate + H(+). The enzyme catalyses hexadecanoyl-CoA + H2O = hexadecanoate + CoA + H(+). It carries out the reaction S-hexadecanoyl-N-acetylcysteamine + H2O = N-acetylcysteamine + hexadecanoate + H(+). The catalysed reaction is S-hexadecanoyl-N-acetylcysteine methyl ester + H2O = N-acetylcysteine methyl ester + hexadecanoate + H(+). Palmitoylation reduces PPT1 enzymatic activity. Functionally, has thioesterase activity against fatty acid thioesters with 14 -18 carbons, including palmitoyl-CoA, S-palmitoyl-N-acetylcysteamine, and palmitoylated proteins. In contrast to PPT2, PPT1 can hydrolyze palmitoylated proteins and palmitoylcysteine. The sequence is that of Palmitoyl-protein thioesterase 1 (PPT1) from Macaca fascicularis (Crab-eating macaque).